The chain runs to 123 residues: Large ribosomal subunit protein uL14 (123 aa).

The protein belongs to the universal ribosomal protein uL14 family. In terms of assembly, part of the 50S ribosomal subunit. Forms a cluster with proteins L3 and L19. In the 70S ribosome, L14 and L19 interact and together make contacts with the 16S rRNA in bridges B5 and B8.

Binds to 23S rRNA. Forms part of two intersubunit bridges in the 70S ribosome. The protein is Large ribosomal subunit protein uL14 of Buchnera aphidicola subsp. Acyrthosiphon kondoi (Acyrthosiphon kondoi symbiotic bacterium).